Reading from the N-terminus, the 403-residue chain is Alkaline protease 1 (403 aa).

The first 21 residues, 1 to 21 (MLSIKRTLLLLGAVLPAVFGA), serve as a signal peptide directing secretion. Residues 22–125 (PVQETRRAAQ…QIWYIDALTT (104 aa)) constitute a propeptide that is removed on maturation. In terms of domain architecture, Inhibitor I9 spans 36 to 120 (KYIVTFKPGT…HVEEDQIWYI (85 aa)). The 274-residue stretch at 130 to 403 (PWGLGSISHK…PNKLAYNGNA (274 aa)) folds into the Peptidase S8 domain. Active-site charge relay system residues include Asp162 and His193. N-linked (GlcNAc...) asparagine glycans are attached at residues Asn253 and Asn307. The Charge relay system role is filled by Ser349.

This sequence belongs to the peptidase S8 family.

The protein resides in the secreted. It catalyses the reaction Hydrolysis of proteins with broad specificity, and of Bz-Arg-OEt &gt; Ac-Tyr-OEt. Does not hydrolyze peptide amides.. In terms of biological role, secreted alkaline protease that allows assimilation of proteinaceous substrates. The protein is Alkaline protease 1 (alp1) of Neosartorya fischeri (strain ATCC 1020 / DSM 3700 / CBS 544.65 / FGSC A1164 / JCM 1740 / NRRL 181 / WB 181) (Aspergillus fischerianus).